Reading from the N-terminus, the 105-residue chain is DNA-directed RNA polymerase RPB9 homolog (105 aa).

Zn(2+)-binding residues include cysteine 4, cysteine 7, cysteine 24, cysteine 26, cysteine 73, cysteine 76, and cysteine 96. A C4-type; atypical zinc finger spans residues 4–26 (CKACSSCMVRTYVDGNIIFRCSC).

The protein belongs to the Asfivirus DNA-directed RNA polymerase RPB9 homolog family. In terms of assembly, part of the viral DNA-directed RNA polymerase that consists of 8 polII-like subunits (RPB1, RPB2, RPB3, RPB5, RPB6, RPB7, RPB9, RPB10), a capping enzyme and a termination factor.

The protein resides in the host cytoplasm. Functionally, component of the DNA-directed RNA polymerase (RNAP) that catalyzes the transcription in the cytoplasm of viral DNA into RNA using the four ribonucleoside triphosphates as substrates. The chain is DNA-directed RNA polymerase RPB9 homolog from African swine fever virus (isolate Pig/Kenya/KEN-50/1950) (ASFV).